A 385-amino-acid polypeptide reads, in one-letter code: Chaperone protein DnaJ (385 aa).

In terms of domain architecture, J spans 5-70 (DYYEVLGVAK…QKRAAYDRYG (66 aa)). The CR-type zinc finger occupies 145-223 (GFDTEIRVPS…CDGVGRTRRN (79 aa)). Positions 158, 161, 175, 178, 197, 200, 211, and 214 each coordinate Zn(2+). CXXCXGXG motif repeat units lie at residues 158 to 165 (CDTCHGSG), 175 to 182 (CRTCGGSG), 197 to 204 (CPTCHGTG), and 211 to 218 (CPSCDGVG).

It belongs to the DnaJ family. Homodimer. Requires Zn(2+) as cofactor.

The protein resides in the cytoplasm. Participates actively in the response to hyperosmotic and heat shock by preventing the aggregation of stress-denatured proteins and by disaggregating proteins, also in an autonomous, DnaK-independent fashion. Unfolded proteins bind initially to DnaJ; upon interaction with the DnaJ-bound protein, DnaK hydrolyzes its bound ATP, resulting in the formation of a stable complex. GrpE releases ADP from DnaK; ATP binding to DnaK triggers the release of the substrate protein, thus completing the reaction cycle. Several rounds of ATP-dependent interactions between DnaJ, DnaK and GrpE are required for fully efficient folding. Also involved, together with DnaK and GrpE, in the DNA replication of plasmids through activation of initiation proteins. This chain is Chaperone protein DnaJ, found in Bordetella pertussis (strain Tohama I / ATCC BAA-589 / NCTC 13251).